Reading from the N-terminus, the 776-residue chain is Probable E3 ubiquitin-protein ligase HECTD2 (776 aa).

The disordered stretch occupies residues 1–46 (MSEAVRVPSPATPLVVAAPAPEERKGKESEREKLPPIVSAGAGATA). Positions 7–20 (VPSPATPLVVAAPA) are enriched in low complexity. At Ser-9 the chain carries Phosphoserine. Over residues 21 to 34 (PEERKGKESEREKL) the composition is skewed to basic and acidic residues. The 340-residue stretch at 437–776 (KRADLKKKLK…ISNSEGFGLE (340 aa)) folds into the HECT domain. The Glycyl thioester intermediate role is filled by Cys-744.

The catalysed reaction is S-ubiquitinyl-[E2 ubiquitin-conjugating enzyme]-L-cysteine + [acceptor protein]-L-lysine = [E2 ubiquitin-conjugating enzyme]-L-cysteine + N(6)-ubiquitinyl-[acceptor protein]-L-lysine.. Its pathway is protein modification; protein ubiquitination. Functionally, E3 ubiquitin-protein ligase which accepts ubiquitin from an E2 ubiquitin-conjugating enzyme in the form of a thioester and then directly transfers the ubiquitin to targeted substrates. Its function is as follows. (Microbial infection) Catalyzes ubiquitination of Botulinum neurotoxin A light chain (LC) of C.botulinum neurotoxin type A (BoNT/A). The chain is Probable E3 ubiquitin-protein ligase HECTD2 from Homo sapiens (Human).